A 335-amino-acid polypeptide reads, in one-letter code: Glyceraldehyde-3-phosphate dehydrogenase (335 aa).

NAD(+) is bound by residues 15–16 (RI) and Asp37. D-glyceraldehyde 3-phosphate contacts are provided by residues 155-157 (SCT), Thr186, Arg201, 214-215 (TG), and Arg237. Cys156 (nucleophile) is an active-site residue. 2 residues coordinate NAD(+): Gln301 and Asn318.

This sequence belongs to the glyceraldehyde-3-phosphate dehydrogenase family. Homotetramer.

It is found in the cytoplasm. It catalyses the reaction D-glyceraldehyde 3-phosphate + phosphate + NADP(+) = (2R)-3-phospho-glyceroyl phosphate + NADPH + H(+). The catalysed reaction is D-glyceraldehyde 3-phosphate + phosphate + NAD(+) = (2R)-3-phospho-glyceroyl phosphate + NADH + H(+). It participates in carbohydrate degradation; glycolysis; pyruvate from D-glyceraldehyde 3-phosphate: step 1/5. This chain is Glyceraldehyde-3-phosphate dehydrogenase (gap), found in Haloarcula vallismortis (Halobacterium vallismortis).